The sequence spans 63 residues: Cytochrome b-c1 complex subunit 9 (63 aa).

At 2-21 the chain is on the mitochondrial matrix side; it reads AAATLTSKLYSLLFRRTSTF. A helical membrane pass occupies residues 22 to 47; sequence ALTIIVGVMFFERAFDQGADAIYDHI. At 48–63 the chain is on the mitochondrial intermembrane side; sequence NEGKLWKHIKHKYENK.

This sequence belongs to the UQCR10/QCR9 family. As to quaternary structure, component of the ubiquinol-cytochrome c oxidoreductase (cytochrome b-c1 complex, complex III, CIII), a multisubunit enzyme composed of 11 subunits. The complex is composed of 3 respiratory subunits cytochrome b, cytochrome c1 and Rieske protein UQCRFS1, 2 core protein subunits UQCRC1/QCR1 and UQCRC2/QCR2, and 6 low-molecular weight protein subunits UQCRH/QCR6, UQCRB/QCR7, UQCRQ/QCR8, UQCR10/QCR9, UQCR11/QCR10 and subunit 9, the cleavage product of Rieske protein UQCRFS1. The complex exists as an obligatory dimer and forms supercomplexes (SCs) in the inner mitochondrial membrane with NADH-ubiquinone oxidoreductase (complex I, CI) and cytochrome c oxidase (complex IV, CIV), resulting in different assemblies (supercomplex SCI(1)III(2)IV(1) and megacomplex MCI(2)III(2)IV(2)). Interacts with STMP1.

The protein localises to the mitochondrion inner membrane. Functionally, component of the ubiquinol-cytochrome c oxidoreductase, a multisubunit transmembrane complex that is part of the mitochondrial electron transport chain which drives oxidative phosphorylation. The respiratory chain contains 3 multisubunit complexes succinate dehydrogenase (complex II, CII), ubiquinol-cytochrome c oxidoreductase (cytochrome b-c1 complex, complex III, CIII) and cytochrome c oxidase (complex IV, CIV), that cooperate to transfer electrons derived from NADH and succinate to molecular oxygen, creating an electrochemical gradient over the inner membrane that drives transmembrane transport and the ATP synthase. The cytochrome b-c1 complex catalyzes electron transfer from ubiquinol to cytochrome c, linking this redox reaction to translocation of protons across the mitochondrial inner membrane, with protons being carried across the membrane as hydrogens on the quinol. In the process called Q cycle, 2 protons are consumed from the matrix, 4 protons are released into the intermembrane space and 2 electrons are passed to cytochrome c. This Homo sapiens (Human) protein is Cytochrome b-c1 complex subunit 9 (UQCR10).